The chain runs to 49 residues: Large ribosomal subunit protein bL33 (49 aa).

This sequence belongs to the bacterial ribosomal protein bL33 family.

The protein is Large ribosomal subunit protein bL33 of Streptococcus pyogenes serotype M18 (strain MGAS8232).